We begin with the raw amino-acid sequence, 405 residues long: Putative polysaccharide ligase RT0347 (405 aa).

The next 10 helical transmembrane spans lie at 23-43 (IAATVLFFLLIIVITELISFI), 77-97 (LFIAWCFISCLFTIHPINSLV), 120-140 (ILYLKNSLILGIITAILLFFI), 156-178 (FGLYMLDRGCALLSITTWVVIII), 201-221 (ISDSLASFVGFSIGGIIFILA), 227-247 (IFFKLITISLITGSLLFPIIA), 270-290 (LFIWHFVANKIIIKPILGYGF), 322-342 (ILQITLELGILGLALFLCLVY), 353-375 (ISNFRAASYSCFINYYIIGMISY), and 377-397 (IWQTWWILSGIWILVLMKLLV).

Belongs to the O-antigen ligase family.

It is found in the membrane. The protein is Putative polysaccharide ligase RT0347 of Rickettsia typhi (strain ATCC VR-144 / Wilmington).